The chain runs to 662 residues: MSYKANQPSPGEMPKRSPSILVTDARTSKNRMSAPFAGHAAGSRKNMENAGVTKSQGVRSSAIGPSPLQSFTHPRRRSSGRFSDISIDNILSDNSDIPSARREERLSSSSSDRPRQYERLSSRRKMINPLPPRTSKTSQKLVLIPEDDNLNHFQTLPTNALDRQRPKVGSMKSNSFDRLPRYSKEKSMARITAYNVADGFNLNQLYKFLQETHEVSPRLYDECLYVAYTLPLLPGKGGFRIKSNLSKKTMGGKTLIDNLIDTSEQRDHHYEYYSGVETVEDANNNYELETSGNNNNANQDTTTVPDHLPNPVGQQDSFNPMEPQFFAEETPLEIEKRERTERINMLKKEENDSDASCGNDNNNKNNDKSKLYAVEGNDQYVQSSRSPASPSSISTPSPPSSSQNDFDRVYKMHRDNDHEGNDRHAEIFIFHYGVIVFWNFTEIQEKNILGDITFADYKNLMIRPLDEQDIETEQFHFEYDRDTERPRIFNDIVTLRSGDHIIELTLSHAIAQSSKLSRFESRISPILISVTKLPKRLALYGTLGLKREQLLKKSGKLFKLRVDVNLSSTILDTPEFFWSFEPSLHPLYVAMREYLEIDQRVQVLNDRCKVFLEFFDICVDSVAERNMARVTWWFILVILFGVIFSLTEIFVRYVIIHRHTST.

3 disordered regions span residues methionine 1–lysine 136, tyrosine 286–proline 320, and leucine 346–phenylalanine 406. Serine 2 is modified (N-acetylserine). The span at serine 99–serine 121 shows a compositional bias: basic and acidic residues. Polar residues predominate over residues tyrosine 286–valine 304. The segment covering serine 383–threonine 395 has biased composition (low complexity). The chain crosses the membrane as a helical span at residues valine 630–threonine 647.

Belongs to the RMD1/sif2 family.

The protein resides in the membrane. Its function is as follows. Required for sporulation. The sequence is that of Sporulation protein RMD8 (RMD8) from Saccharomyces cerevisiae (strain ATCC 204508 / S288c) (Baker's yeast).